The sequence spans 83 residues: MSSGGLLLLLGLLTLWEVLTPISSKDRPKFCELPADTGPCKAIFQAFYYHPVHRTCLKFIYGGCEGNANNFKTIDECKRTCAA.

The first 24 residues, 1–24 (MSSGGLLLLLGLLTLWEVLTPISS), serve as a signal peptide directing secretion. The 51-residue stretch at 31–81 (CELPADTGPCKAIFQAFYYHPVHRTCLKFIYGGCEGNANNFKTIDECKRTC) folds into the BPTI/Kunitz inhibitor domain. Disulfide bonds link C31–C81, C40–C64, and C56–C77.

This sequence belongs to the venom Kunitz-type family. As to expression, expressed by the venom gland.

The protein resides in the secreted. In terms of biological role, serine protease inhibitor. The chain is Kunitz-type serine protease inhibitor superbin-2 from Austrelaps superbus (Lowland copperhead snake).